The sequence spans 333 residues: Glycerol-3-phosphate dehydrogenase [NAD(P)+] (333 aa).

Ser-13, Tyr-14, Arg-34, and Lys-108 together coordinate NADPH. The sn-glycerol 3-phosphate site is built by Lys-108, Gly-137, and Thr-139. Ala-141 is a binding site for NADPH. Residues Lys-193, Asp-246, Ser-256, Arg-257, and Asn-258 each contribute to the sn-glycerol 3-phosphate site. Lys-193 acts as the Proton acceptor in catalysis. Arg-257 is a binding site for NADPH. Residue Glu-283 participates in NADPH binding.

Belongs to the NAD-dependent glycerol-3-phosphate dehydrogenase family.

The protein localises to the cytoplasm. The catalysed reaction is sn-glycerol 3-phosphate + NAD(+) = dihydroxyacetone phosphate + NADH + H(+). It catalyses the reaction sn-glycerol 3-phosphate + NADP(+) = dihydroxyacetone phosphate + NADPH + H(+). It participates in membrane lipid metabolism; glycerophospholipid metabolism. Catalyzes the reduction of the glycolytic intermediate dihydroxyacetone phosphate (DHAP) to sn-glycerol 3-phosphate (G3P), the key precursor for phospholipid synthesis. This is Glycerol-3-phosphate dehydrogenase [NAD(P)+] from Idiomarina loihiensis (strain ATCC BAA-735 / DSM 15497 / L2-TR).